Consider the following 1073-residue polypeptide: Probable cellulose synthase A catalytic subunit 2 [UDP-forming] (1073 aa).

Topologically, residues 1 to 270 (MDGAKSGKQC…SSSRINPYRM (270 aa)) are cytoplasmic. Zn(2+) contacts are provided by C13, C16, C32, C35, C40, C43, C55, and C58. Residues 13–59 (CQICGDGVGTAADGELFTACDVCGFPVCRPCYEYERKDGSQACPQCK) form an RING-type; degenerate zinc finger. A disordered region spans residues 66–98 (KGSPPILGDESDDVDADDASDVNYPTSGNQDHK). Residues 74 to 85 (DESDDVDADDAS) show a composition bias toward acidic residues. The chain crosses the membrane as a helical span at residues 271–291 (VIVLRLIVLCIFLHYRITNPV). At 292 to 293 (RN) the chain is on the extracellular side. A helical membrane pass occupies residues 294-314 (AYPLWLLSVICEIWFALSWIL). The Cytoplasmic portion of the chain corresponds to 315 to 856 (DQFPKWSPIN…INTTIYPLTS (542 aa)). Positions 353, 359, 360, and 389 each coordinate UDP-alpha-D-glucose. D389 is an active-site residue. Residues 443–470 (VKDRRAMKREYEEFKVRVNALVAKAQKV) adopt a coiled-coil conformation. Position 530 (K530) interacts with UDP-alpha-D-glucose. Residues K531 and D555 each coordinate Mn(2+). Positions 655–676 (GGRKKTKKSKEKSTEKKKSHKH) are disordered. D773 is a catalytic residue. A helical transmembrane segment spans residues 857–877 (IPLLLYCILPAICLLTGKFII). Residues 878-882 (PEISN) are Extracellular-facing. Residues 883–903 (FASIWFISLFLSIFATGILEM) form a helical membrane-spanning segment. The Cytoplasmic portion of the chain corresponds to 904 to 918 (RWSGVGIDEWWRNEQ). A helical membrane pass occupies residues 919 to 939 (FWVIGGISAHLFAVFQGLLKV). Topologically, residues 940-969 (LAGIDTSFTVTSKASDEEGDFAELYMFKWT) are extracellular. Residues 970-990 (TLLIPPTTILIINLVGVVAGI) traverse the membrane as a helical segment. At 991-1001 (SYAINSGYQSW) the chain is on the cytoplasmic side. The chain crosses the membrane as a helical span at residues 1002-1022 (GPLFGKLFFAFWVIVHLYPFL). The Extracellular segment spans residues 1023–1031 (KGLMGRQNR). The chain crosses the membrane as a helical span at residues 1032-1052 (TPTIVVVWAILLASIFSLLWV). At 1053 to 1073 (RIDPFTTRVTGPDTQKCGINC) the chain is on the cytoplasmic side.

It belongs to the glycosyltransferase 2 family. Plant cellulose synthase subfamily. Requires Mn(2+) as cofactor. Zn(2+) is required as a cofactor.

It is found in the cell membrane. The catalysed reaction is [(1-&gt;4)-beta-D-glucosyl](n) + UDP-alpha-D-glucose = [(1-&gt;4)-beta-D-glucosyl](n+1) + UDP + H(+). It participates in glycan metabolism; plant cellulose biosynthesis. Its function is as follows. Probable catalytic subunit of cellulose synthase terminal complexes ('rosettes'), required for beta-1,4-glucan microfibril crystallization, a major mechanism of the cell wall formation. This is Probable cellulose synthase A catalytic subunit 2 [UDP-forming] (CESA2) from Oryza sativa subsp. japonica (Rice).